A 341-amino-acid polypeptide reads, in one-letter code: Tryptophan--tRNA ligase (341 aa).

ATP contacts are provided by residues 11–13 and 19–20; these read RPT and GH. The 'HIGH' region signature appears at 12–20; it reads PTGKLHIGH. L-tryptophan is bound at residue aspartate 140. Residues 152 to 154, leucine 194, and 202 to 206 each bind ATP; these read GTD and KMSKS. A 'KMSKS' region motif is present at residues 202–206; sequence KMSKS.

Belongs to the class-I aminoacyl-tRNA synthetase family. Homodimer.

The protein localises to the cytoplasm. The catalysed reaction is tRNA(Trp) + L-tryptophan + ATP = L-tryptophyl-tRNA(Trp) + AMP + diphosphate + H(+). Catalyzes the attachment of tryptophan to tRNA(Trp). This chain is Tryptophan--tRNA ligase, found in Streptococcus agalactiae serotype III (strain NEM316).